Reading from the N-terminus, the 725-residue chain is ATP-dependent rRNA helicase SPB4 (725 aa).

The Q motif signature appears at 15–43; it reads WAKLNPPLSPWILDVINSMGFKNMTPVQA. In terms of domain architecture, Helicase ATP-binding spans 46–260; the sequence is IPRAVKNQDC…GLGLRNPVRI (215 aa). Position 59 to 66 (59 to 66) interacts with ATP; sequence AVTGSGKT. The disordered stretch occupies residues 119-156; it reads ESEEETGDVEAHAPPFASSSRSPSPQTPDKPLFPLPML. Over residues 132–142 the composition is skewed to low complexity; that stretch reads PPFASSSRSPS. The segment covering 143 to 152 has biased composition (pro residues); sequence PQTPDKPLFP. The DEAD box signature appears at 207 to 210; it reads DEAD. In terms of domain architecture, Helicase C-terminal spans 295–458; it reads KTLQLIRLLL…YINAYLEEVD (164 aa). Residues 591–725 form a disordered region; that stretch reads AQRADNQSSN…IGGGMFDDLE (135 aa). Composition is skewed to basic and acidic residues over residues 603–646 and 685–707; these read ARAE…KYEW and EIGK…KESS. Residues 709–725 show a composition bias toward gly residues; the sequence is GGAGGGGIGGGMFDDLE.

Belongs to the DEAD box helicase family. DDX55/SPB4 subfamily. In terms of assembly, component of pre-60S ribosomal complexes.

It is found in the nucleus. Its subcellular location is the nucleolus. The enzyme catalyses ATP + H2O = ADP + phosphate + H(+). In terms of biological role, ATP-binding RNA helicase involved in the biogenesis of 60S ribosomal subunits. Binds 90S pre-ribosomal particles and dissociates from pre-60S ribosomal particles after processing of 27SB pre-rRNA. Required for the normal formation of 18S rRNA through the processing of pre-rRNAs at sites A0, A1 and A2, and the normal formation of 25S and 5.8S rRNAs through the processing of pre-rRNAs at sites C1 and C2. The polypeptide is ATP-dependent rRNA helicase SPB4 (Cryptococcus neoformans var. neoformans serotype D (strain JEC21 / ATCC MYA-565) (Filobasidiella neoformans)).